Reading from the N-terminus, the 404-residue chain is S-adenosylmethionine synthase (404 aa).

His-18 lines the ATP pocket. Residue Asp-20 coordinates Mg(2+). Residue Glu-46 coordinates K(+). 2 residues coordinate L-methionine: Glu-59 and Gln-102. The interval 102 to 112 (QSPEIAQGVDH) is flexible loop. ATP contacts are provided by residues 178-180 (DGK), 249-250 (KF), Asp-258, 264-265 (RK), Ala-281, and Lys-285. An L-methionine-binding site is contributed by Asp-258. An L-methionine-binding site is contributed by Lys-289.

The protein belongs to the AdoMet synthase family. Homotetramer; dimer of dimers. Mg(2+) is required as a cofactor. It depends on K(+) as a cofactor.

Its subcellular location is the cytoplasm. It catalyses the reaction L-methionine + ATP + H2O = S-adenosyl-L-methionine + phosphate + diphosphate. The protein operates within amino-acid biosynthesis; S-adenosyl-L-methionine biosynthesis; S-adenosyl-L-methionine from L-methionine: step 1/1. In terms of biological role, catalyzes the formation of S-adenosylmethionine (AdoMet) from methionine and ATP. The overall synthetic reaction is composed of two sequential steps, AdoMet formation and the subsequent tripolyphosphate hydrolysis which occurs prior to release of AdoMet from the enzyme. The chain is S-adenosylmethionine synthase from Rhodococcus opacus (strain B4).